Consider the following 511-residue polypeptide: 2,3-bisphosphoglycerate-independent phosphoglycerate mutase (511 aa).

Residues aspartate 14 and serine 64 each contribute to the Mn(2+) site. Serine 64 functions as the Phosphoserine intermediate in the catalytic mechanism. Substrate-binding positions include histidine 125, 155-156 (RD), arginine 187, arginine 193, 259-262 (RADR), and lysine 333. Residues aspartate 400, histidine 404, aspartate 441, histidine 442, and histidine 460 each contribute to the Mn(2+) site.

This sequence belongs to the BPG-independent phosphoglycerate mutase family. Monomer. The cofactor is Mn(2+).

The enzyme catalyses (2R)-2-phosphoglycerate = (2R)-3-phosphoglycerate. It functions in the pathway carbohydrate degradation; glycolysis; pyruvate from D-glyceraldehyde 3-phosphate: step 3/5. In terms of biological role, catalyzes the interconversion of 2-phosphoglycerate and 3-phosphoglycerate. The polypeptide is 2,3-bisphosphoglycerate-independent phosphoglycerate mutase (Pseudomonas putida (strain GB-1)).